Reading from the N-terminus, the 153-residue chain is Insulin-like growth factor 1.S (153 aa).

Cystine bridges form between C29/C38, C54/C96, C66/C109, and C100/C109. The b stretch occupies residues 49–77 (GPETLCGAELVDTLQFVCGDRGFYFSKPT). Positions 78 to 89 (GYGSNNRRSHHR) are c. The interval 90–110 (GIVDECCFQSCDFRRLEMYCA) is a. Residues 111-118 (PAKQAKSA) are d. The propeptide at 119–153 (RSVRTQRHTDMPKAQKEVHPKNTSRGNTGSRGFRM) is e peptide. Residues 119 to 153 (RSVRTQRHTDMPKAQKEVHPKNTSRGNTGSRGFRM) are disordered. The span at 125-138 (RHTDMPKAQKEVHP) shows a compositional bias: basic and acidic residues. Residues 139–153 (KNTSRGNTGSRGFRM) are compositionally biased toward polar residues.

The protein belongs to the insulin family. In terms of tissue distribution, expressed in adult liver, lung, heart, kidney and peritoneal fat.

It is found in the secreted. The insulin-like growth factors, isolated from plasma, are structurally and functionally related to insulin but have a much higher growth-promoting activity. Promotes head development by inhibiting Wnt signaling during embryogenesis. Acts as a ligand for IGF1R. Binds to the alpha subunit of IGF1R, leading to the activation of the intrinsic tyrosine kinase activity which autophosphorylates tyrosine residues in the beta subunit thus initiatiating a cascade of down-stream signaling events leading to activation of the PI3K-AKT/PKB and the Ras-MAPK pathways. Binds to integrins. Its binding to integrins and subsequent ternary complex formation with integrins and IGFR1 are essential for IGF1 signaling. The sequence is that of Insulin-like growth factor 1.S from Xenopus laevis (African clawed frog).